The primary structure comprises 457 residues: G-protein coupled receptor 135 (457 aa).

Positions 1 to 26 (MEEQARPPGRPAASATLQGSAHPGGA) are disordered. Residues 1 to 64 (MEEQARPPGR…EAAGSRGPAP (64 aa)) lie on the Extracellular side of the membrane. An N-linked (GlcNAc...) asparagine glycan is attached at N47. Residues 65–85 (LLWHGAAVAAQALVLLLIFLL) traverse the membrane as a helical segment. Topologically, residues 86 to 109 (SSLGNCAVMGVIVKHRQLRTVTNA) are cytoplasmic. Residues 110–130 (FILSLSLSDLLTALLCLPAAF) form a helical membrane-spanning segment. Residues 131–156 (LDLFAPPGDSGPWRSFCAASRFFSSC) are Extracellular-facing. The chain crosses the membrane as a helical span at residues 157–177 (FGIVSTFSVALISLDRYCAIV). Over 178–189 (RPPRDKLGRRRA) the chain is Cytoplasmic. The chain crosses the membrane as a helical span at residues 190 to 210 (LQLLAGAWLAALGFSLPWDLL). Residues 211–235 (RAPREPPAPQSFHRCLYRTSPDPAQ) are Extracellular-facing. The chain crosses the membrane as a helical span at residues 236-256 (LGVAYSVGLVVACYLLPFLLM). Topologically, residues 257–295 (CFCRYHICKTVRLSDVRVRPMTTYARVLRFFSEVRTATT) are cytoplasmic. The helical transmembrane segment at 296–316 (VLIMIIFVMCCWGPYCFLVLL) threads the bilayer. The Extracellular segment spans residues 317–329 (AATRQGQATQAPS). The chain crosses the membrane as a helical span at residues 330–350 (LLNVAAVWLTWANGAINPVIY). At 351–457 (AIRNPNISML…HNSETRDSSI (107 aa)) the chain is on the cytoplasmic side.

This sequence belongs to the G-protein coupled receptor 1 family. Interacts with MTNR1B. Interacts with ARRB1 and ARRB2 in a spontaneous and agonist-independent manner; leading to the internalization of GPR135 in the endosomal compartment.

Its subcellular location is the cell membrane. It is found in the endosome membrane. Functionally, orphan receptor. Has spontaneous activity for beta-arrestin recruitment. Shows a reciprocal regulatory interaction with the melatonin receptor MTNR1B most likely through receptor heteromerization. This chain is G-protein coupled receptor 135 (Gpr135), found in Mus musculus (Mouse).